Consider the following 241-residue polypeptide: Probable transcriptional regulatory protein stu0195 (241 aa).

Belongs to the TACO1 family. YeeN subfamily.

It localises to the cytoplasm. This Streptococcus thermophilus (strain ATCC BAA-250 / LMG 18311) protein is Probable transcriptional regulatory protein stu0195.